Consider the following 155-residue polypeptide: RNA pyrophosphohydrolase (155 aa).

The 143-residue stretch at 6-148 (GYRANVAIVL…KQDVYRRALT (143 aa)) folds into the Nudix hydrolase domain. Residues 38–59 (GGVATGETPLQAMYRELYEEVG) carry the Nudix box motif.

Belongs to the Nudix hydrolase family. RppH subfamily. A divalent metal cation serves as cofactor.

In terms of biological role, accelerates the degradation of transcripts by removing pyrophosphate from the 5'-end of triphosphorylated RNA, leading to a more labile monophosphorylated state that can stimulate subsequent ribonuclease cleavage. The chain is RNA pyrophosphohydrolase from Francisella philomiragia subsp. philomiragia (strain ATCC 25017 / CCUG 19701 / FSC 153 / O#319-036).